Reading from the N-terminus, the 815-residue chain is Protein SMAX1-LIKE 3 (815 aa).

Residues V8–E171 form the Clp R domain. Repeat stretches follow at residues L12–L80 and I99–E171. A disordered region spans residues S750–D769. An EAR motif is present at residues L778 to L782.

The protein belongs to the ClpA/ClpB family. As to quaternary structure, interacts probably with TPL/TPR in an EAR-motif dependent manner. As to expression, expressed in roots and seedlings.

May function in a transcriptional corepressor complex. The sequence is that of Protein SMAX1-LIKE 3 from Arabidopsis thaliana (Mouse-ear cress).